We begin with the raw amino-acid sequence, 239 residues long: Ribosomal RNA small subunit methyltransferase G (239 aa).

Residues Gly-76, Phe-81, 99–101 (DSS), 128–129 (IE), and Arg-147 each bind S-adenosyl-L-methionine.

The protein belongs to the methyltransferase superfamily. RNA methyltransferase RsmG family.

The protein resides in the cytoplasm. Functionally, specifically methylates the N7 position of a guanine in 16S rRNA. This Prochlorococcus marinus (strain MIT 9515) protein is Ribosomal RNA small subunit methyltransferase G.